A 428-amino-acid polypeptide reads, in one-letter code: Phosphoribosylamine--glycine ligase (428 aa).

The ATP-grasp domain occupies 109–316 (KDFLARHNIP…LVELCLAGTQ (208 aa)). 135–196 (VRQKGAPIVI…EEFLDGEEAS (62 aa)) is an ATP binding site. Mg(2+) is bound by residues Glu-286 and Asn-288.

Belongs to the GARS family. Mg(2+) serves as cofactor. It depends on Mn(2+) as a cofactor.

It carries out the reaction 5-phospho-beta-D-ribosylamine + glycine + ATP = N(1)-(5-phospho-beta-D-ribosyl)glycinamide + ADP + phosphate + H(+). It functions in the pathway purine metabolism; IMP biosynthesis via de novo pathway; N(1)-(5-phospho-D-ribosyl)glycinamide from 5-phospho-alpha-D-ribose 1-diphosphate: step 2/2. The polypeptide is Phosphoribosylamine--glycine ligase (Yersinia pestis).